The sequence spans 620 residues: E3 ubiquitin-protein ligase DTX1 (620 aa).

2 consecutive WWE domains span residues 14–94 (GLGF…PVRR) and 95–171 (NFYD…RLRR). 3 disordered regions span residues 221–248 (SQRRKAPPAPPLPPPPPPGGPPGALAVR), 262–313 (PAAG…SIPP), and 361–391 (PPVSKSDVKPVPGVPGVCRKTKKKHLKKSKN). Pro residues-rich tracts occupy residues 227–241 (PPAPPLPPPPPPGGP) and 268–280 (EPAPPPGAPPRSP). Positions 230-233 (PPLP) match the SH3-binding motif. Polar residues predominate over residues 291–307 (QNNLNRPGPQRTTSVSA). A compositionally biased stretch (basic residues) spans 379-389 (RKTKKKHLKKS). The RING-type zinc finger occupies 411-472 (CTICMERLVT…DGSLQCPTCK (62 aa)).

It belongs to the Deltex family. In terms of assembly, homodimer. May form a heterodimer with other members of the Deltex family. Interacts with NOTCH1 via its N-terminal region and EIF3F, the interaction is required for NOTCH1 deubiquitination. Interacts with EP300. Forms a heterodimer with BBAP; the heterodimerization leading to an increase of in vitro ubiquitin ligase activity. Interacts with ITCH. Post-translationally, ubiquitinated; undergoes 'Lys-29'-linked polyubiquitination catalyzed by ITCH. As to expression, widely expressed. Strongly expressed in blood vessel. Also expressed in embryonic nervous system, pancreas, lung, adrenal gland, digestive tube and muscles. Expressed in MZB cells and developing B- and T-cells.

The protein resides in the cytoplasm. The protein localises to the nucleus. It catalyses the reaction S-ubiquitinyl-[E2 ubiquitin-conjugating enzyme]-L-cysteine + [acceptor protein]-L-lysine = [E2 ubiquitin-conjugating enzyme]-L-cysteine + N(6)-ubiquitinyl-[acceptor protein]-L-lysine.. It participates in protein modification; protein ubiquitination. Its function is as follows. Functions as a ubiquitin ligase protein in vivo, mediating ubiquitination and promoting degradation of MEKK1, suggesting that it may regulate the Notch pathway via some ubiquitin ligase activity. Regulator of Notch signaling, a signaling pathway involved in cell-cell communications that regulates a broad spectrum of cell-fate determinations. Mainly acts as a positive regulator of Notch, but it also acts as a negative regulator, depending on the developmental and cell context. Mediates the antineural activity of Notch, possibly by inhibiting the transcriptional activation mediated by MATCH1. Involved in neurogenesis, lymphogenesis and myogenesis, and may also be involved in MZB (Marginal zone B) cell differentiation. Promotes B-cell development at the expense of T-cell development, suggesting that it can antagonize NOTCH1. This Homo sapiens (Human) protein is E3 ubiquitin-protein ligase DTX1 (DTX1).